The primary structure comprises 481 residues: Trigger factor (481 aa).

The 138-residue stretch at 161–298 (GDQLTATVQT…VSEIQNRQLP (138 aa)) folds into the PPIase FKBP-type domain. Residues 173-245 (DGVPLHKLDE…PTTLIMEERR (73 aa)) are disordered. Acidic residues predominate over residues 182-235 (EEDDDDDDDDDDDDDDDDDDDDDDDDDDDDDDDDDDDDDDDDDDDDDDDDDEGE).

It belongs to the FKBP-type PPIase family. Tig subfamily.

The protein localises to the cytoplasm. The catalysed reaction is [protein]-peptidylproline (omega=180) = [protein]-peptidylproline (omega=0). Its function is as follows. Involved in protein export. Acts as a chaperone by maintaining the newly synthesized protein in an open conformation. Functions as a peptidyl-prolyl cis-trans isomerase. In Herpetosiphon aurantiacus (strain ATCC 23779 / DSM 785 / 114-95), this protein is Trigger factor.